A 67-amino-acid polypeptide reads, in one-letter code: Peptide Hp1239 (67 aa).

The first 23 residues, methionine 1–alanine 23, serve as a signal peptide directing secretion. A Phenylalanine amide modification is found at phenylalanine 36. Positions glycine 40 to methionine 67 are excised as a propeptide.

It belongs to the non-disulfide-bridged peptide (NDBP) superfamily. Short antimicrobial peptide (group 4) family. As to expression, expressed by the venom gland.

The protein resides in the secreted. It localises to the target cell membrane. Functionally, amphipathic peptide with antibacterial activities. Shows antiviral activities against the herpes simplex virus type-1. It potently inhibits the initial infection by provoking the rupture of viral envelop and the dissociation of proteins from the virions (EC(50) is 0.41 uM). It also effectively inhibits viral attachment (EC(50) is 5.73 uM), viral entry (EC(50) is 4.32 uM) and viral proliferation after infection (EC(50) is 8.41 uM). Morever, it enters mammalian tested cells (Vero) and reduces the intracellular infectivity. This chain is Peptide Hp1239, found in Heterometrus petersii (Asian forest scorpion).